The chain runs to 915 residues: Alpha-xylosidase 1 (915 aa).

The signal sequence occupies residues 1-27 (MASSSSSLAFSLSLLLALILCFSPTQS). N153, N304, and N375 each carry an N-linked (GlcNAc...) asparagine glycan. Active-site residues include D440 and E443. Residues N476 and N490 are each glycosylated (N-linked (GlcNAc...) asparagine). D563 functions as the Proton donor in the catalytic mechanism. 3 N-linked (GlcNAc...) asparagine glycosylation sites follow: N819, N888, and N907.

The protein belongs to the glycosyl hydrolase 31 family. In terms of tissue distribution, expressed in roots, stems, leaves, flowers and siliques. Expressed in cell types undergoing cell wall modifications, including trichomes, vasculature, stomata, and elongating anther filaments. Not detected in pollen.

It localises to the secreted. It is found in the cell wall. The protein localises to the extracellular space. Its subcellular location is the apoplast. It carries out the reaction Hydrolysis of terminal, non-reducing alpha-D-xylose residues with release of alpha-D-xylose.. Its function is as follows. Glycoside hydrolase releasing xylosyl residues from xyloglucan oligosaccharides at the non-reducing end. Has alpha-xylosidase activity against xylan oligosaccharides. Also has alpha-glucosidase activity against p-nitrophenyl-alpha-D-glucopyranoside. No activity against p-nitrophenyl-D-xyloside. This Arabidopsis thaliana (Mouse-ear cress) protein is Alpha-xylosidase 1.